The chain runs to 274 residues: Thiamine kinase (274 aa).

Belongs to the thiamine kinase family.

The catalysed reaction is thiamine + ATP = thiamine phosphate + ADP + H(+). It functions in the pathway cofactor biosynthesis; thiamine diphosphate biosynthesis; thiamine phosphate from thiamine: step 1/1. Its function is as follows. Catalyzes the ATP-dependent phosphorylation of thiamine to thiamine phosphate. Is involved in thiamine salvage. This chain is Thiamine kinase, found in Salmonella choleraesuis (strain SC-B67).